Here is a 156-residue protein sequence, read N- to C-terminus: Ribosomal RNA large subunit methyltransferase H (156 aa).

Residues L73, G104, and 123–128 (LSPLTL) contribute to the S-adenosyl-L-methionine site.

The protein belongs to the RNA methyltransferase RlmH family. In terms of assembly, homodimer.

It localises to the cytoplasm. It carries out the reaction pseudouridine(1915) in 23S rRNA + S-adenosyl-L-methionine = N(3)-methylpseudouridine(1915) in 23S rRNA + S-adenosyl-L-homocysteine + H(+). Specifically methylates the pseudouridine at position 1915 (m3Psi1915) in 23S rRNA. This is Ribosomal RNA large subunit methyltransferase H from Yersinia pseudotuberculosis serotype O:1b (strain IP 31758).